The chain runs to 208 residues: Claudin-like protein ZF-A89 (208 aa).

A run of 4 helical transmembrane segments spans residues 8 to 28 (LLAT…CALP), 82 to 102 (ALVV…IAGG), 117 to 137 (VVVA…IPVC), and 160 to 180 (LGAS…GGAL).

The protein belongs to the claudin family.

Its subcellular location is the cell membrane. It is found in the cell junction. It localises to the tight junction. In terms of biological role, component of tight junction (TJ) strands. This Danio rerio (Zebrafish) protein is Claudin-like protein ZF-A89 (cldnd).